A 480-amino-acid polypeptide reads, in one-letter code: Coronin-2B (480 aa).

7 WD repeats span residues 29 to 77 (HCFD…GRIE), 78 to 127 (PNYP…RNMT), 128 to 170 (EALL…LDVG), 171 to 212 (EPVK…PRSG), 213 to 259 (RVLQ…EDLS), 260 to 305 (MPLI…TEKP), and 306 to 345 (YLSYLMEFRSPAPQKGLGVMPKHGLDVSACEVFRFYKLVT). A coiled-coil region spans residues 436–479 (NELLRMFFRQQDEIRRLKEELAQKDIRIRQLQLELKNLRNSPKN).

This sequence belongs to the WD repeat coronin family. In terms of assembly, binds to F-actin and to vinculin. As to expression, expressed predominantly in brain.

It is found in the cytoplasm. The protein localises to the cytoskeleton. Its function is as follows. May play a role in the reorganization of neuronal actin structure. This Homo sapiens (Human) protein is Coronin-2B (CORO2B).